A 271-amino-acid chain; its full sequence is Aquaporin-1 (271 aa).

Over 1-11 the chain is Cytoplasmic; it reads MASEFKKKIFW. The chain crosses the membrane as a helical span at residues 12-29; that stretch reads RAVVAEFLAMTLFIFISI. The Extracellular portion of the chain corresponds to 30–48; sequence GSALGFQYPVRNNQTSGAA. A glycan (N-linked (GlcNAc...) asparagine) is linked at Asn-42. A helical membrane pass occupies residues 49–67; sequence QDNVKVSLAFGLSIATLAQ. Residues 68 to 70 are Cytoplasmic-facing; that stretch reads SVG. The stretch at 71–84 is an intramembrane region; that stretch reads HISGAHLNPAVTLG. An NPA 1 motif is present at residues 78–80; it reads NPA. The Cytoplasmic segment spans residues 85–92; the sequence is LLLSCQIS. The chain crosses the membrane as a helical span at residues 93 to 111; the sequence is VLRAVMYIIAQCVGAIVAT. Residues 112–135 are Extracellular-facing; that stretch reads AILSGITSSLPGNSLGLNSLAPGV. A helical transmembrane segment spans residues 136-155; the sequence is DSGQGLGIEIIGTLQLVLCV. Residues 156–165 are Cytoplasmic-facing; sequence LATTDRRRRD. Residues 166–183 form a helical membrane-spanning segment; that stretch reads LGGSAPLAIGFSVALGHL. The Extracellular portion of the chain corresponds to 184 to 188; it reads LAIDY. The stretch at 189 to 201 is an intramembrane region; sequence TGCGINPARSFGS. Residues 194–196 carry the NPA 2 motif; that stretch reads NPA. Topologically, residues 202–208 are extracellular; it reads AVITHNF. Residues 209–226 traverse the membrane as a helical segment; sequence QDHWVFWVGPFIGGALAV. At 227 to 271 the chain is on the cytoplasmic side; that stretch reads LIYDFILAPRSSDLTDRVKVWTSGQVEEYDLDGDDINSRVEMKPK. Position 249 is a phosphoserine (Ser-249). Tyr-255 is subject to Phosphotyrosine. A Phosphoserine modification is found at Ser-264.

It belongs to the MIP/aquaporin (TC 1.A.8) family. Homotetramer; each monomer provides an independent water pore. Component of the ankyrin-1 complex in the erythrocyte, composed of ANK1, RHCE, RHAG, SLC4A1, EPB42, GYPA, GYPB and AQP1. Interacts with EPHB2; involved in endolymph production in the inner ear. Identified in a complex with STOM. Interacts (via the N-terminal) with ANK1 (via ANK 1-5 repeats). Interacts (via the C-terminal) with EPB42.

It localises to the cell membrane. The enzyme catalyses H2O(in) = H2O(out). The catalysed reaction is nitric oxide(out) = nitric oxide(in). It carries out the reaction CO2(out) = CO2(in). It catalyses the reaction glycerol(in) = glycerol(out). The enzyme catalyses H2O2(out) = H2O2(in). The catalysed reaction is K(+)(in) = K(+)(out). It carries out the reaction Na(+)(in) = Na(+)(out). Functionally, forms a water channel that facilitates the transport of water across cell membranes, playing a crucial role in water homeostasis in various tissues. Could also be permeable to small solutes including hydrogen peroxide, glycerol and gases such as amonnia (NH3), nitric oxide (NO) and carbon dioxide (CO2). Recruited to the ankyrin-1 complex, a multiprotein complex of the erythrocyte membrane, it could be part of a CO2 metabolon, linking facilitated diffusion of CO2 across the membrane, anion exchange of Cl(-)/HCO3(-) and interconversion of dissolved CO2 and carbonic acid in the cytosol. In vitro, it shows non-selective gated cation channel activity and may be permeable to cations like K(+) and Na(+) in vivo. The protein is Aquaporin-1 of Sus scrofa (Pig).